A 556-amino-acid chain; its full sequence is Formate--tetrahydrofolate ligase (556 aa).

65–72 is an ATP binding site; sequence TPAGEGKS.

The protein belongs to the formate--tetrahydrofolate ligase family.

The enzyme catalyses (6S)-5,6,7,8-tetrahydrofolate + formate + ATP = (6R)-10-formyltetrahydrofolate + ADP + phosphate. Its pathway is one-carbon metabolism; tetrahydrofolate interconversion. This chain is Formate--tetrahydrofolate ligase, found in Streptococcus suis (strain 98HAH33).